The sequence spans 595 residues: Elongation factor 4 (595 aa).

Residues 2-184 enclose the tr-type G domain; the sequence is KNIRNFSIIA…QIVEKIPAPK (183 aa). GTP is bound by residues 14–19 and 131–134; these read DHGKST and NKID.

This sequence belongs to the TRAFAC class translation factor GTPase superfamily. Classic translation factor GTPase family. LepA subfamily.

Its subcellular location is the cell inner membrane. It carries out the reaction GTP + H2O = GDP + phosphate + H(+). Functionally, required for accurate and efficient protein synthesis under certain stress conditions. May act as a fidelity factor of the translation reaction, by catalyzing a one-codon backward translocation of tRNAs on improperly translocated ribosomes. Back-translocation proceeds from a post-translocation (POST) complex to a pre-translocation (PRE) complex, thus giving elongation factor G a second chance to translocate the tRNAs correctly. Binds to ribosomes in a GTP-dependent manner. The sequence is that of Elongation factor 4 from Ruthia magnifica subsp. Calyptogena magnifica.